We begin with the raw amino-acid sequence, 445 residues long: UNC93-like protein MFSD11 (445 aa).

The chain crosses the membrane as a helical span at residues 8–28; sequence LLNIIILGIGFMFMFTAFQTS. Asn-40 carries N-linked (GlcNAc...) asparagine glycosylation. 4 helical membrane passes run 53–73, 74–94, 98–118, and 138–158; these read AIIY…VAVI, GCQM…AMFI, TWSF…LWTA, and IFWA…YLAW. N-linked (GlcNAc...) asparagine glycosylation is present at Asn-163. The next 7 helical transmembrane spans lie at 170-190, 239-259, 277-297, 309-329, 345-365, 385-405, and 415-435; these read RTVF…FFLI, MLLL…YSGV, LIGL…GLFG, PVVI…YLYM, AFIN…GLGD, APAF…AFFY, and LLIL…VEWG.

The protein belongs to the unc-93 family.

It is found in the membrane. This chain is UNC93-like protein MFSD11 (mfsd11), found in Xenopus tropicalis (Western clawed frog).